The primary structure comprises 702 residues: Pentatricopeptide repeat-containing protein At4g16390, chloroplastic (702 aa).

The transit peptide at 1-53 directs the protein to the chloroplast; that stretch reads MSFHHLCSSPSSLLHDPLPLCNLLSVYPKSTPRSFLSSYNPNSSHFHSRNLLQ. PPR repeat units follow at residues 174 to 208, 209 to 243, 244 to 278, 279 to 313, 314 to 348, 349 to 383, 384 to 414, 420 to 454, and 455 to 489; these read EVILYNVTMKVFRKSKDLEKSEKLFDEMLERGIKP, DNATFTTIISCARQNGVPKRAVEWFEKMSSFGCEP, DNVTMAAMIDAYGRAGNVDMALSLYDRARTEKWRI, DAVTFSTLIRIYGVSGNYDGCLNIYEEMKALGVKP, NLVIYNRLIDSMGRAKRPWQAKIIYKDLITNGFTP, NWSTYAALVRAYGRARYGDDALAIYREMKEKGLSL, TVILYNTLLSMCADNRYVDEAFEIFQDMKNC, DSWTFSSLITVYACSGRVSEAEAALLQMREAGFEP, and TLFVLTSVIQCYGKAKQVDDVVRTFDQVLELGITP. Positions 603-688 constitute a Smr domain; sequence LHLKSLSLGA…WFLTTSVAAK (86 aa).

Belongs to the PPR family. P subfamily. In terms of tissue distribution, expressed in leaves and flowers and at lower levels in stems and flower buds.

The protein localises to the plastid. It localises to the chloroplast. In terms of biological role, involved in chloroplast RNA processing. Can bind RNA. Involved in chloroplast development. Involved in chloroplast ribosomal RNA (rRNA) processing and/or translation. Required for FtsH-mediated chloroplast biogenesis. Involved in translation and accumulation of chloroplast ATP synthase subunits. In Arabidopsis thaliana (Mouse-ear cress), this protein is Pentatricopeptide repeat-containing protein At4g16390, chloroplastic.